The sequence spans 65 residues: Lantipeptide Flvbeta.h (65 aa).

The propeptide at 1-27 (MERYGHLAGVIPVDEIDDMFESNVIGG) is cleaved by FlvT. A 2,3-didehydrobutyrine; by FlvM2 modification is found at threonine 28. The segment at residues 29-33 (SSIDC) is a cross-link (lanthionine (Ser-Cys); by FlvM2). Serine 30 is subject to 2,3-didehydroalanine (Ser); by FlvM2. At threonine 44 the chain carries 2,3-didehydrobutyrine; by FlvM2. The segment at residues 48-54 (TVRIEFC) is a cross-link (beta-methyllanthionine (Thr-Cys); by FlvM2). A cross-link (lanthionine (Ser-Cys); by FlvM2) is located at residues 56–59 (SAAC). A cross-link (beta-methyllanthionine (Thr-Cys); by FlvM2) is located at residues 60–63 (TYSC).

In terms of processing, contains LL-lanthionine, DL-lanthionine, and DL-beta-methyllanthionine, when coepressed in E.coli with the flavecin synthetase FlvM2.

Its subcellular location is the secreted. In terms of biological role, lanthionine-containing peptide that does probably not show antibacterial activity, since its analog [+2]Flvbeta.h does not show antibacterial activity against M.luteus. Also does not show antibiotic activity when tested with [Del2]Flvalpha.a, an analog of Flvalpha.a, which is encoded by the same operon than Flvbeta.h. The bactericidal activity of lantibiotics is based on depolarization of energized bacterial cytoplasmic membranes, initiated by the formation of aqueous transmembrane pores. The sequence is that of Lantipeptide Flvbeta.h from Ruminococcus flavefaciens.